We begin with the raw amino-acid sequence, 87 residues long: DNA/RNA-binding protein Alba (87 aa).

Lysine 9 is modified (N6-acetyllysine).

It belongs to the histone-like Alba family. Acetylated. Acetylation at Lys-9 decreases DNA-binding affinity.

It is found in the cytoplasm. The protein localises to the chromosome. Binds double-stranded DNA tightly but without sequence specificity. Involved in DNA compaction. The protein is DNA/RNA-binding protein Alba of Methanocaldococcus jannaschii (strain ATCC 43067 / DSM 2661 / JAL-1 / JCM 10045 / NBRC 100440) (Methanococcus jannaschii).